The following is a 106-amino-acid chain: Large ribosomal subunit protein uL23 (106 aa).

Belongs to the universal ribosomal protein uL23 family. As to quaternary structure, part of the 50S ribosomal subunit. Contacts protein L29, and trigger factor when it is bound to the ribosome.

One of the early assembly proteins it binds 23S rRNA. One of the proteins that surrounds the polypeptide exit tunnel on the outside of the ribosome. Forms the main docking site for trigger factor binding to the ribosome. The chain is Large ribosomal subunit protein uL23 from Neisseria meningitidis serogroup A / serotype 4A (strain DSM 15465 / Z2491).